We begin with the raw amino-acid sequence, 118 residues long: Large ribosomal subunit protein bL20 (118 aa).

The protein belongs to the bacterial ribosomal protein bL20 family.

In terms of biological role, binds directly to 23S ribosomal RNA and is necessary for the in vitro assembly process of the 50S ribosomal subunit. It is not involved in the protein synthesizing functions of that subunit. This chain is Large ribosomal subunit protein bL20, found in Clostridioides difficile (strain 630) (Peptoclostridium difficile).